The following is a 420-amino-acid chain: Transmembrane protease serine 11B-like protein (420 aa).

The Cytoplasmic portion of the chain corresponds to 1-19 (MTVSKLRPVIASRKSFPPW). The chain crosses the membrane as a helical; Signal-anchor for type II membrane protein span at residues 20–40 (MIILGVLGVLAILGLIIGLLV). Residues 41-420 (HFLAVENKIY…RDWIASKTGI (380 aa)) lie on the Extracellular side of the membrane. One can recognise an SEA domain in the interval 48–165 (KIYYYQGSFK…GSLKLTEITK (118 aa)). Residues asparagine 111 and asparagine 146 are each glycosylated (N-linked (GlcNAc...) asparagine). Positions 189–419 (ITGGSTAQKG…YRDWIASKTG (231 aa)) constitute a Peptidase S1 domain. Cysteine 214 and cysteine 230 are disulfide-bonded. The active-site Charge relay system is histidine 229. The N-linked (GlcNAc...) asparagine glycan is linked to asparagine 239. The Charge relay system role is filled by aspartate 274. Cystine bridges form between cysteine 339/cysteine 355 and cysteine 366/cysteine 395. Serine 370 (charge relay system) is an active-site residue.

This sequence belongs to the peptidase S1 family.

Its subcellular location is the membrane. The protein resides in the cell membrane. Inhibited by aprotinin, leupeptin, benzamidine, SERPINA1, SPINT1 and SPINT2. Functionally, serine protease. The polypeptide is Transmembrane protease serine 11B-like protein (Tmprss11bnl) (Rattus norvegicus (Rat)).